The primary structure comprises 328 residues: Tetraacyldisaccharide 4'-kinase (328 aa).

55–62 (TAGGNGKT) serves as a coordination point for ATP.

It belongs to the LpxK family.

The enzyme catalyses a lipid A disaccharide + ATP = a lipid IVA + ADP + H(+). It functions in the pathway glycolipid biosynthesis; lipid IV(A) biosynthesis; lipid IV(A) from (3R)-3-hydroxytetradecanoyl-[acyl-carrier-protein] and UDP-N-acetyl-alpha-D-glucosamine: step 6/6. In terms of biological role, transfers the gamma-phosphate of ATP to the 4'-position of a tetraacyldisaccharide 1-phosphate intermediate (termed DS-1-P) to form tetraacyldisaccharide 1,4'-bis-phosphate (lipid IVA). This chain is Tetraacyldisaccharide 4'-kinase, found in Escherichia coli O17:K52:H18 (strain UMN026 / ExPEC).